Here is a 276-residue protein sequence, read N- to C-terminus: MGAMEDQLQRLGSVLDSLDARVKKLEQHPTLGGGSSTAQEIRMILIGPPGAGKGTQAPKIKEKFSCCHLATGDMLRSQVAKKTPLGREAKKIMDQGGLVSDDIVIGMIKEELDTNVECKGGFILDGFPRTVPQAQSLDAMLQARNQKLQHAVELQIDDALLVARITGRLVHPASGRSYHTTFNPPKKAMTDDVTGEPLIQRSDDNADALKKRLATYHSQTAPVVDYYRKTGIWKPIDASQEPGTVWKSLLNIFDGDAKKASSAGGGILDKLAASGR.

50 to 55 contacts ATP; the sequence is GAGKGT. The interval 70 to 99 is NMP; the sequence is ATGDMLRSQVAKKTPLGREAKKIMDQGGLV. Residues T71, R76, 97–99, 126–129, and Q133 each bind AMP; these read GLV and GFPR. The interval 167 to 204 is LID; the sequence is GRLVHPASGRSYHTTFNPPKKAMTDDVTGEPLIQRSDD. ATP is bound by residues R168 and 177 to 178; that span reads SY. Residues R201 and R212 each contribute to the AMP site. An ATP-binding site is contributed by Q240.

This sequence belongs to the adenylate kinase family. AK2 subfamily. In terms of assembly, monomer.

Its subcellular location is the cytoplasm. The protein resides in the cytosol. It localises to the mitochondrion intermembrane space. The enzyme catalyses AMP + ATP = 2 ADP. In terms of biological role, catalyzes the reversible transfer of the terminal phosphate group between ATP and AMP. Plays an important role in cellular energy homeostasis and in adenine nucleotide metabolism. Adenylate kinase activity is critical for regulation of the phosphate utilization and the AMP de novo biosynthesis pathways. The polypeptide is Adenylate kinase (Pyricularia oryzae (strain 70-15 / ATCC MYA-4617 / FGSC 8958) (Rice blast fungus)).